Consider the following 1575-residue polypeptide: Lysophospholipase NTE1 (1575 aa).

The interval 1–56 is disordered; that stretch reads MNLTTTMPAAVAPDPPAQLAVSSRSLSDSSDAAGASRTSSSCRASSPSHCPTHAWN. Topologically, residues 1-99 are cytoplasmic; it reads MNLTTTMPAA…TLSPPNLLQG (99 aa). Residues 19 to 48 show a composition bias toward low complexity; it reads LAVSSRSLSDSSDAAGASRTSSSCRASSPS. The chain crosses the membrane as a helical span at residues 100–120; sequence IVSQLAMASYIGRLLLYLFQV. Residues 121 to 151 lie on the Lumenal side of the membrane; sequence VPSLLYWAITFTTITVPTALFTLFSMSLTFT. Residues 152–172 traverse the membrane as a helical segment; that stretch reads MNFTTLLIIVLLLVSTVSWFI. Topologically, residues 173 to 1575 are cytoplasmic; sequence RYRFLNIYSR…RTMAPRRASI (1403 aa). Disordered regions lie at residues 339–425 and 568–587; these read DMES…AKSV and GSAS…VSPG. Residues 409-424 are compositionally biased toward basic residues; it reads RGHRRKRPSRPKRAKS. A nucleoside 3',5'-cyclic phosphate contacts are provided by residues 737 to 856 and 894 to 1014; these read GGTS…TSYR and RLTT…IAQR. Residues 1272 to 1436 enclose the PNPLA domain; the sequence is LVLGGGGARG…VDNLTVARMK (165 aa). Positions 1276-1281 match the GXGXXG motif; the sequence is GGGARG. The short motif at 1303-1307 is the GXSXG element; it reads GTSIG. The active-site Nucleophile is Ser-1305. The active-site Proton acceptor is Asp-1423. The DGA/G motif lies at 1423-1425; that stretch reads DGG.

The protein belongs to the NTE family.

Its subcellular location is the endoplasmic reticulum membrane. The enzyme catalyses a 1-acyl-sn-glycero-3-phosphocholine + H2O = sn-glycerol 3-phosphocholine + a fatty acid + H(+). With respect to regulation, inhibited by organophosphorus esters. Intracellular phospholipase B that catalyzes the double deacylation of phosphatidylcholine (PC) to glycerophosphocholine (GroPCho). Plays an important role in membrane lipid homeostasis. Responsible for the rapid PC turnover in response to inositol, elevated temperatures, or when choline is present in the growth medium. The protein is Lysophospholipase NTE1 (NTE1) of Coccidioides immitis (strain RS) (Valley fever fungus).